A 259-amino-acid chain; its full sequence is Acyl-[acyl-carrier-protein]--UDP-N-acetylglucosamine O-acyltransferase (259 aa).

It belongs to the transferase hexapeptide repeat family. LpxA subfamily. In terms of assembly, homotrimer.

The protein resides in the cytoplasm. It catalyses the reaction a (3R)-hydroxyacyl-[ACP] + UDP-N-acetyl-alpha-D-glucosamine = a UDP-3-O-[(3R)-3-hydroxyacyl]-N-acetyl-alpha-D-glucosamine + holo-[ACP]. It functions in the pathway glycolipid biosynthesis; lipid IV(A) biosynthesis; lipid IV(A) from (3R)-3-hydroxytetradecanoyl-[acyl-carrier-protein] and UDP-N-acetyl-alpha-D-glucosamine: step 1/6. In terms of biological role, involved in the biosynthesis of lipid A, a phosphorylated glycolipid that anchors the lipopolysaccharide to the outer membrane of the cell. The polypeptide is Acyl-[acyl-carrier-protein]--UDP-N-acetylglucosamine O-acyltransferase (Psychrobacter sp. (strain PRwf-1)).